Consider the following 413-residue polypeptide: Cardiolipin synthase B (413 aa).

2 PLD phosphodiesterase domains span residues 108–135 and 285–312; these read VFRR…SSEH and RRRP…DPLS. Residues H113, K115, D120, H290, K292, and D297 contribute to the active site. Residues 388 to 413 form a disordered region; that stretch reads TQVDPPAQPTMETQDRVETENTGVNP.

It belongs to the phospholipase D family. Cardiolipin synthase subfamily. ClsB sub-subfamily.

The protein resides in the cell membrane. It catalyses the reaction 2 a 1,2-diacyl-sn-glycero-3-phospho-(1'-sn-glycerol) = a cardiolipin + glycerol. Its function is as follows. Catalyzes the phosphatidyl group transfer from one phosphatidylglycerol molecule to another to form cardiolipin (CL) (diphosphatidylglycerol) and glycerol. The chain is Cardiolipin synthase B from Shigella flexneri.